We begin with the raw amino-acid sequence, 310 residues long: Acetyl-coenzyme A carboxylase carboxyl transferase subunit alpha (310 aa).

In terms of domain architecture, CoA carboxyltransferase C-terminal spans 31–285; that stretch reads SFERELRIIN…KQKILRRLKQ (255 aa).

Belongs to the AccA family. Acetyl-CoA carboxylase is a heterohexamer composed of biotin carboxyl carrier protein (accB), biotin carboxylase (accC) and two subunits each of ACCase subunit alpha (accA) and ACCase subunit beta (accD).

It is found in the plastid. Its subcellular location is the chloroplast. The enzyme catalyses N(6)-carboxybiotinyl-L-lysyl-[protein] + acetyl-CoA = N(6)-biotinyl-L-lysyl-[protein] + malonyl-CoA. The protein operates within lipid metabolism; malonyl-CoA biosynthesis; malonyl-CoA from acetyl-CoA: step 1/1. Its function is as follows. Component of the acetyl coenzyme A carboxylase (ACC) complex. First, biotin carboxylase catalyzes the carboxylation of biotin on its carrier protein (BCCP) and then the CO(2) group is transferred by the carboxyltransferase to acetyl-CoA to form malonyl-CoA. The sequence is that of Acetyl-coenzyme A carboxylase carboxyl transferase subunit alpha from Cyanidioschyzon merolae (strain NIES-3377 / 10D) (Unicellular red alga).